The chain runs to 87 residues: Putative regulatory protein ABC2323 (87 aa).

Belongs to the RemA family.

This chain is Putative regulatory protein ABC2323, found in Shouchella clausii (strain KSM-K16) (Alkalihalobacillus clausii).